Consider the following 48-residue polypeptide: uncharacterized protein (48 aa).

The interval 1–48 is disordered; that stretch reads MSRRMGGGMPKINLSGAIPNNNTSTPSTPTLRSSVSVSSSNSRGLFLA. A compositionally biased stretch (low complexity) spans 20–48; sequence NNNTSTPSTPTLRSSVSVSSSNSRGLFLA.

This is an uncharacterized protein from Dictyostelium discoideum (Social amoeba).